The chain runs to 398 residues: Phosphoglycerate kinase (398 aa).

Substrate contacts are provided by residues 23-25 (DFN), arginine 38, 61-64 (HMGK), arginine 122, and arginine 155. ATP-binding positions include lysine 206, glycine 297, glutamate 328, and 354–357 (GGDS).

This sequence belongs to the phosphoglycerate kinase family. Monomer.

It is found in the cytoplasm. The catalysed reaction is (2R)-3-phosphoglycerate + ATP = (2R)-3-phospho-glyceroyl phosphate + ADP. It functions in the pathway carbohydrate degradation; glycolysis; pyruvate from D-glyceraldehyde 3-phosphate: step 2/5. In Clostridium botulinum (strain Langeland / NCTC 10281 / Type F), this protein is Phosphoglycerate kinase.